A 263-amino-acid chain; its full sequence is Orotidine 5'-phosphate decarboxylase (263 aa).

Residues Asp36, 58–60 (KTH), 90–99 (DRKFADIGNT), Tyr216, and Arg234 each bind substrate. The Proton donor role is filled by Lys92.

The protein belongs to the OMP decarboxylase family.

It carries out the reaction orotidine 5'-phosphate + H(+) = UMP + CO2. Its pathway is pyrimidine metabolism; UMP biosynthesis via de novo pathway; UMP from orotate: step 2/2. The polypeptide is Orotidine 5'-phosphate decarboxylase (URA3) (Komagataella pastoris (Yeast)).